The primary structure comprises 999 residues: Protein Smaug (999 aa).

Positions 1 to 37 (MKYATGTDNAMTSGISGQTNNSNSVSNEMQPTTSTPT) are enriched in polar residues. Disordered stretches follow at residues 1–45 (MKYA…EATS), 50–69 (TATY…QSQP), and 321–370 (CSSV…GSSS). The segment covering 321-338 (CSSVASSSMCPASGSRSS) has biased composition (low complexity). Phosphoserine occurs at positions 564 and 575. The tract at residues 583–763 (EFKPNYIKFH…KDLKFKLSKM (181 aa)) is interaction with cup. Residues 600-654 (GIGLWLKSLRLHKYIELFKNMTYEEMLLITEDFLQSVGVTKGASHKLALCIDKLK) form the SAM domain. The disordered stretch occupies residues 773–892 (HVKPAGVGPN…HHHAQQMQQM (120 aa)). Composition is skewed to polar residues over residues 801-822 (KNGS…NFSL) and 854-864 (HQPQYKSSSYP). Ser-972 carries the phosphoserine modification.

Belongs to the SMAUG family. As to quaternary structure, interacts with oskar (osk). Binds to the 3'-UTR of nos. Interacts with cup, which in turn recruits eIF4-E, leading to an indirect interaction between smg and eIF4-E that prevents mRNA translation.

It localises to the cytoplasm. Translation regulator that binds to the 3'-UTR of specific mRNAs such as nanos (nos) and prevent their translation. Prevents translation of unlocalized nos in the bulk cytoplasm via the recruitment of cup. The chain is Protein Smaug (smg) from Drosophila yakuba (Fruit fly).